We begin with the raw amino-acid sequence, 221 residues long: MKTLVLKISGKFVSPYDTPLVEGYAKTLEALRRKYKLAVVVGGGSVARKYIELAPPSKGLKDLIGIEVSRLNALLLSMHTPSAKKVIPKSASEVLELWDGEDILIVGGLQPGQSTNAVALVVAELVGADLVVNATTVDAVYDKPPSQPGAKRIEKIKARELQRLLESFDWKNEPGRYELMDSIALQIAERSKIPIAVIYGGEPERIPSIVEEEAWGTLILP.

7 to 11 (KISGK) contacts ATP. Glycine 43 lines the UMP pocket. ATP is bound by residues glycine 44 and arginine 48. UMP-binding positions include aspartate 62 and 109–115 (LQPGQST). 2 residues coordinate ATP: threonine 135 and tyrosine 141.

Belongs to the UMP kinase family. Homohexamer.

The protein resides in the cytoplasm. It catalyses the reaction UMP + ATP = UDP + ADP. Its pathway is pyrimidine metabolism; CTP biosynthesis via de novo pathway; UDP from UMP (UMPK route): step 1/1. Inhibited by UTP. Catalyzes the reversible phosphorylation of UMP to UDP. This is Uridylate kinase from Ignicoccus hospitalis (strain KIN4/I / DSM 18386 / JCM 14125).